A 528-amino-acid chain; its full sequence is MGKTLADQITELANKSKVPDFDIEDEQVFEHDSNASGSEASDEDEALQAAHYVQVGRSKLRNKHNVLVEDSKYSGSKGSREALFNSSGEEDGSESDRRGSDSDGGSDSDSDAPEATLSSEQSADESARSDSDSGDSDSDSGSDAGEENSAVAEDADAKRERLSQLVRLETQQAMGKLNAAVQNDALKGYAIMEQSRFFEGAIDVRIKLQKAIAAANQLPLTKQSWESRLDAQDAELLESTCKLLHKVAGKCAELRTTFQNKERINQTEIDYQPSKKRSIDALAEQCHDLDSQLRDYRGAVLHMWSSKVAATSGKTALSSSKFKAINQPANVQVDNQLADMPRLVKRTQLNRRGVVPLGFEEDYKQKRLPLLDSNSAQDGGQEEDADVPANYDPRKKDNNAIDASENPYIFDDEDFYRVLLNDLVDKKILNAQQGSNVQVAIKARSQNKLKKNVDTKASKGRKLNYSVQEPIANYEAPINGGFKWSDEQIDEFFAGLLGQRVNFDERETSEAKDNEEEAIEHDDLRIFG.

2 disordered regions span residues 14–158 (NKSK…ADAK) and 372–401 (DSNS…NNAI). Over residues 132–146 (DSGDSDSDSGSDAGE) the composition is skewed to acidic residues.

Belongs to the AATF family.

It is found in the nucleus. It localises to the nucleolus. The sequence is that of Protein BFR2 (BFR2) from Eremothecium gossypii (strain ATCC 10895 / CBS 109.51 / FGSC 9923 / NRRL Y-1056) (Yeast).